Consider the following 347-residue polypeptide: NADH-ubiquinone oxidoreductase chain 2 (347 aa).

Transmembrane regions (helical) follow at residues 1-21 (MNPL…IITM), 25-45 (HWLT…PLIM), 59-79 (YFLI…INFM), 96-116 (TIIL…FWVP), 123-143 (LLST…SILY), 153-173 (IILA…LNQT), 178-198 (IMAY…IYNP), 200-220 (LMLL…TILI), 239-259 (ILMM…PLSG), 278-298 (ISLT…RLIY), and 325-345 (FLPT…MMFI).

The protein belongs to the complex I subunit 2 family. Core subunit of respiratory chain NADH dehydrogenase (Complex I) which is composed of 45 different subunits. Interacts with TMEM242.

The protein resides in the mitochondrion inner membrane. It carries out the reaction a ubiquinone + NADH + 5 H(+)(in) = a ubiquinol + NAD(+) + 4 H(+)(out). Its function is as follows. Core subunit of the mitochondrial membrane respiratory chain NADH dehydrogenase (Complex I) that is believed to belong to the minimal assembly required for catalysis. Complex I functions in the transfer of electrons from NADH to the respiratory chain. The immediate electron acceptor for the enzyme is believed to be ubiquinone. The sequence is that of NADH-ubiquinone oxidoreductase chain 2 from Oryzorictes hova (Hova rice tenrec).